The following is a 590-amino-acid chain: Urease subunit alpha (590 aa).

Residues 134–590 form the Urease domain; the sequence is GGIDSHIHFI…LPLAQRYFLF (457 aa). 3 residues coordinate Ni(2+): H139, H141, and K222. At K222 the chain carries N6-carboxylysine. H224 serves as a coordination point for substrate. 2 residues coordinate Ni(2+): H251 and H277. The active-site Proton donor is the H325. D365 contributes to the Ni(2+) binding site. Residues 388-416 form a disordered region; that stretch reads QQRGWLSPPAAGQGAGLSSAAGQGVDHDT. Low complexity predominate over residues 393–411; it reads LSPPAAGQGAGLSSAAGQG.

Belongs to the metallo-dependent hydrolases superfamily. Urease alpha subunit family. In terms of assembly, heterotrimer of UreA (gamma), UreB (beta) and UreC (alpha) subunits. Three heterotrimers associate to form the active enzyme. Requires Ni cation as cofactor. Carboxylation allows a single lysine to coordinate two nickel ions.

The protein localises to the cytoplasm. The catalysed reaction is urea + 2 H2O + H(+) = hydrogencarbonate + 2 NH4(+). Its pathway is nitrogen metabolism; urea degradation; CO(2) and NH(3) from urea (urease route): step 1/1. The polypeptide is Urease subunit alpha (Verminephrobacter eiseniae (strain EF01-2)).